A 509-amino-acid polypeptide reads, in one-letter code: uncharacterized protein (509 aa).

The G domain occupies 108–225 (GKSSLCNLLA…KRHKPLFPVI (118 aa)).

This is an uncharacterized protein from Acinetobacter baylyi (strain ATCC 33305 / BD413 / ADP1).